A 176-amino-acid polypeptide reads, in one-letter code: ATP synthase subunit delta (176 aa).

The protein belongs to the ATPase delta chain family. As to quaternary structure, F-type ATPases have 2 components, F(1) - the catalytic core - and F(0) - the membrane proton channel. F(1) has five subunits: alpha(3), beta(3), gamma(1), delta(1), epsilon(1). F(0) has three main subunits: a(1), b(2) and c(10-14). The alpha and beta chains form an alternating ring which encloses part of the gamma chain. F(1) is attached to F(0) by a central stalk formed by the gamma and epsilon chains, while a peripheral stalk is formed by the delta and b chains.

It is found in the cell membrane. F(1)F(0) ATP synthase produces ATP from ADP in the presence of a proton or sodium gradient. F-type ATPases consist of two structural domains, F(1) containing the extramembraneous catalytic core and F(0) containing the membrane proton channel, linked together by a central stalk and a peripheral stalk. During catalysis, ATP synthesis in the catalytic domain of F(1) is coupled via a rotary mechanism of the central stalk subunits to proton translocation. Functionally, this protein is part of the stalk that links CF(0) to CF(1). It either transmits conformational changes from CF(0) to CF(1) or is implicated in proton conduction. This chain is ATP synthase subunit delta, found in Wigglesworthia glossinidia brevipalpis.